The following is a 204-amino-acid chain: Holliday junction branch migration complex subunit RuvA (204 aa).

Positions 1–64 are domain I; sequence MIGRLRGIIL…EDAQLLFGFN (64 aa). Residues 65–143 are domain II; the sequence is SKPERALFRE…GMHGDLFASD (79 aa). Residues 144 to 155 form a flexible linker region; sequence APFALTSEMPKE. Residues 156 to 204 are domain III; it reads TANDAEGEAVAALTALGYKPQEASRMIVKVGKPDADCETLIREALRAAI.

Belongs to the RuvA family. In terms of assembly, homotetramer. Forms an RuvA(8)-RuvB(12)-Holliday junction (HJ) complex. HJ DNA is sandwiched between 2 RuvA tetramers; dsDNA enters through RuvA and exits via RuvB. An RuvB hexamer assembles on each DNA strand where it exits the tetramer. Each RuvB hexamer is contacted by two RuvA subunits (via domain III) on 2 adjacent RuvB subunits; this complex drives branch migration. In the full resolvosome a probable DNA-RuvA(4)-RuvB(12)-RuvC(2) complex forms which resolves the HJ.

It is found in the cytoplasm. In terms of biological role, the RuvA-RuvB-RuvC complex processes Holliday junction (HJ) DNA during genetic recombination and DNA repair, while the RuvA-RuvB complex plays an important role in the rescue of blocked DNA replication forks via replication fork reversal (RFR). RuvA specifically binds to HJ cruciform DNA, conferring on it an open structure. The RuvB hexamer acts as an ATP-dependent pump, pulling dsDNA into and through the RuvAB complex. HJ branch migration allows RuvC to scan DNA until it finds its consensus sequence, where it cleaves and resolves the cruciform DNA. The protein is Holliday junction branch migration complex subunit RuvA of Erwinia tasmaniensis (strain DSM 17950 / CFBP 7177 / CIP 109463 / NCPPB 4357 / Et1/99).